Consider the following 361-residue polypeptide: Cyclin-Y-like protein 2 (361 aa).

The Cyclin N-terminal domain occupies 204–286; sequence MRLTAEFAIV…QFLKLINYNN (83 aa).

This sequence belongs to the cyclin family. Cyclin Y subfamily.

The sequence is that of Cyclin-Y-like protein 2 (CCNYL2) from Homo sapiens (Human).